Here is a 138-residue protein sequence, read N- to C-terminus: MNSLTIIFLLSGLTAYHAVLADGTGSSESVTAGDSGVVVLVMIGALLTLLMTIPIIGLFGIYVRTRASIEEMRGILMQIHLRLITGDQRSNRGDVELGAGASLLTISSQPPSYAEALLMEPVEPQQQEGVPLEAEIRV.

The next 2 membrane-spanning stretches (helical) occupy residues 4–20 (LTIIFLLSGLTAYHAVL) and 37–53 (VVVLVMIGALLTLLMTI).

It is found in the membrane. This is Putative membrane protein ORF6 (ORF6) from Ictalurid herpesvirus 1 (strain Auburn) (IcHV-1).